A 316-amino-acid polypeptide reads, in one-letter code: UDP-N-acetylenolpyruvoylglucosamine reductase (316 aa).

Residues valine 27–lysine 225 form the FAD-binding PCMH-type domain. Arginine 190 is an active-site residue. The active-site Proton donor is serine 239. Glutamate 309 is a catalytic residue.

It belongs to the MurB family. Requires FAD as cofactor.

The protein localises to the cytoplasm. The enzyme catalyses UDP-N-acetyl-alpha-D-muramate + NADP(+) = UDP-N-acetyl-3-O-(1-carboxyvinyl)-alpha-D-glucosamine + NADPH + H(+). It participates in cell wall biogenesis; peptidoglycan biosynthesis. Functionally, cell wall formation. The protein is UDP-N-acetylenolpyruvoylglucosamine reductase of Coxiella burnetii (strain RSA 331 / Henzerling II).